A 148-amino-acid chain; its full sequence is 3-dehydroquinate dehydratase (148 aa).

Tyrosine 23 (proton acceptor) is an active-site residue. Residues asparagine 75, histidine 81, and aspartate 88 each coordinate substrate. Histidine 101 serves as the catalytic Proton donor. Residues 102 to 103 (LS) and arginine 112 each bind substrate.

Belongs to the type-II 3-dehydroquinase family. Homododecamer.

It catalyses the reaction 3-dehydroquinate = 3-dehydroshikimate + H2O. Its pathway is metabolic intermediate biosynthesis; chorismate biosynthesis; chorismate from D-erythrose 4-phosphate and phosphoenolpyruvate: step 3/7. In terms of biological role, catalyzes a trans-dehydration via an enolate intermediate. The chain is 3-dehydroquinate dehydratase from Xanthomonas oryzae pv. oryzae (strain MAFF 311018).